The sequence spans 989 residues: Phosphoenolpyruvate carboxylase (989 aa).

Catalysis depends on residues histidine 175 and lysine 630.

This sequence belongs to the PEPCase type 1 family. It depends on Mg(2+) as a cofactor.

The enzyme catalyses oxaloacetate + phosphate = phosphoenolpyruvate + hydrogencarbonate. Forms oxaloacetate, a four-carbon dicarboxylic acid source for the tricarboxylic acid cycle. In Prochlorococcus marinus (strain AS9601), this protein is Phosphoenolpyruvate carboxylase.